The sequence spans 654 residues: tRNA 5-methylaminomethyl-2-thiouridine biosynthesis bifunctional protein MnmC (654 aa).

The segment at 1–236 (MSTLLQHAQI…KWEVMHGVYT (236 aa)) is tRNA (mnm(5)s(2)U34)-methyltransferase. Positions 262-654 (IGAGLAGSAT…FALRRLIRGK (393 aa)) are FAD-dependent cmnm(5)s(2)U34 oxidoreductase.

In the N-terminal section; belongs to the methyltransferase superfamily. tRNA (mnm(5)s(2)U34)-methyltransferase family. This sequence in the C-terminal section; belongs to the DAO family. Requires FAD as cofactor.

It localises to the cytoplasm. It catalyses the reaction 5-aminomethyl-2-thiouridine(34) in tRNA + S-adenosyl-L-methionine = 5-methylaminomethyl-2-thiouridine(34) in tRNA + S-adenosyl-L-homocysteine + H(+). Its function is as follows. Catalyzes the last two steps in the biosynthesis of 5-methylaminomethyl-2-thiouridine (mnm(5)s(2)U) at the wobble position (U34) in tRNA. Catalyzes the FAD-dependent demodification of cmnm(5)s(2)U34 to nm(5)s(2)U34, followed by the transfer of a methyl group from S-adenosyl-L-methionine to nm(5)s(2)U34, to form mnm(5)s(2)U34. The sequence is that of tRNA 5-methylaminomethyl-2-thiouridine biosynthesis bifunctional protein MnmC from Pseudomonas entomophila (strain L48).